The sequence spans 974 residues: MLPAVFVILALSAVQGLEETLMDTKWTTSELAWVAYPDSGWEEVSGYDEASNPIRTYQVCNVRDSNQNNWLRTQFIPRQDVQRVYVELKFTVRDCNSLPNLRGSCKETFNFFYYESDSDSASADSPFWMENPYIKVDTIAPDESFSRRDSGRVNTKIRSFGPISRAGFYLAFQDLGACVSLISVRVFFKKCPRTTAGFASFPETITGAEPTSLVIAPGTCVPNALEVSVPLKLYCNGDGDWMVPVGACTCAAGFEPAGKDTQCQACKRGTYKSKQGEGSCMPCPANSRAISSAATICSCQNGYYRADGESAETACTSVPSAPRQVISNVNETSVVLEWAEPGHLGGRDDVLYNVICKKCLERLCSRCDDNVQFWPRQLGVTQRLVSVSHLQAHTKYSFEIQAVNGVSGKSPHIPNYFTVNITTNQAAPSSVPMVQSHGSLANSLTLSWAPPESPNGIILDYEIKYYAKGHIGAGNTVTSQRTTVRMEGMTPDTVYVVQVRARTVAGYGAYSEPREFQTIAEDGDRSSLQEQVPMVVGSVTAGLIFIIAVVIIVIVCFSRKQRNDSESEYTEKLQQYMVPGMKLYIDPFTYEDPNEAVRDFAKEIDISCVKIEEVIGAGEFGEVCRGKLKQAGRREQFVAIKTLKAGYTEQQRRDFLGEASIMGQFDHPNIIRLEGVVTRSRPVMILTEFMENGALDSFLRMNDGQFTVIQLVGILRGIASGMKYLSEMNYVHRDLAARNILVNSNLVCKVSDFGLSRFLENSRSDPTYTSALGGKIPIRWTAPEAISYRKFTSASDVWSYGIVMWEVMSYGERPYWDMSNQDVINAIEQDYRLPPPMDCPSALHQLMLDCWLRDRNLRPKFSQIVSSLDKLIRNAASLKVTSPGQAGVSQQLLDRTVPDYTTFPTVSDWLEAIKMGQYQENFLSAGFTSFHLVAQMTAEDLLRIGVTLAGHQKKLLNSVQDMRLQMSQTLPVQV.

The signal sequence occupies residues 1 to 16 (MLPAVFVILALSAVQG). The Extracellular segment spans residues 17–534 (LEETLMDTKW…RSSLQEQVPM (518 aa)). The Eph LBD domain maps to 18-196 (EETLMDTKWT…FFKKCPRTTA (179 aa)). Cys-60 and Cys-178 are joined by a disulfide. 2 consecutive Fibronectin type-III domains span residues 318–426 (VPSA…TNQA) and 427–522 (APSS…IAED). Residues Asn-330 and Asn-420 are each glycosylated (N-linked (GlcNAc...) asparagine). A helical membrane pass occupies residues 535-555 (VVGSVTAGLIFIIAVVIIVIV). Over 556–974 (CFSRKQRNDS…QMSQTLPVQV (419 aa)) the chain is Cytoplasmic. The residue at position 590 (Tyr-590) is a Phosphotyrosine; by autocatalysis. In terms of domain architecture, Protein kinase spans 609–872 (VKIEEVIGAG…QIVSSLDKLI (264 aa)). Residues 615 to 623 (IGAGEFGEV) and Lys-641 each bind ATP. Asp-734 acts as the Proton acceptor in catalysis. The SAM domain occupies 901-965 (TTFPTVSDWL…LNSVQDMRLQ (65 aa)). The PDZ-binding motif lies at 972–974 (VQV).

The protein belongs to the protein kinase superfamily. Tyr protein kinase family. Ephrin receptor subfamily. In terms of assembly, heterotetramer upon binding of the ligand. The heterotetramer is composed of an ephrin dimer and a receptor dimer. Oligomerization is probably required to induce biological responses. Post-translationally, phosphorylated. Autophosphorylates upon ligand-binding. Autophosphorylation on Tyr-590 is required for interaction with SH2 domain-containing proteins. In terms of tissue distribution, expressed in the embryo in pre-somitic mesoderm, caudal somites, midbrain, and cement gland. Most abundant in adult brain, eye, heart, lung and ovary. Lower levels in intestine, kidney, oviduct and pharynx.

It localises to the cell membrane. The protein resides in the cell projection. Its subcellular location is the dendrite. The enzyme catalyses L-tyrosyl-[protein] + ATP = O-phospho-L-tyrosyl-[protein] + ADP + H(+). Its function is as follows. Receptor tyrosine kinase which binds promiscuously transmembrane ephrin-B family ligands residing on adjacent cells, leading to contact-dependent bidirectional signaling into neighboring cells. The signaling pathway downstream of the receptor is referred to as forward signaling while the signaling pathway downstream of the ephrin ligand is referred to as reverse signaling. Generally has an overlapping and redundant function with EPHB2. Like EPHB2, functions in axon guidance during development. In addition to its role in axon guidance also plays an important redundant role with other ephrin-B receptors in development and maturation of dendritic spines and the formation of excitatory synapses. May control other aspects of development through regulation of cell migration and positioning. The chain is Ephrin type-B receptor 3 (ephb3) from Xenopus laevis (African clawed frog).